A 442-amino-acid polypeptide reads, in one-letter code: HTH-type transcriptional regulator NorG (442 aa).

Residues 2 to 46 (KIPSHRQLAIQYNVNRVTIIKSIELLEAEGFIYTKVGSGTYVNDY) form the HTH gntR-type domain. Positions 6–25 (HRQLAIQYNVNRVTIIKSIE) form a DNA-binding region, H-T-H motif. Residue Lys288 is modified to N6-(pyridoxal phosphate)lysine.

This sequence in the C-terminal section; belongs to the class-I pyridoxal-phosphate-dependent aminotransferase family. Requires pyridoxal 5'-phosphate as cofactor.

Functionally, positively regulates the expression of the NorB efflux pump and negatively regulates the expression of the AbcA efflux pump. Binds specifically to the promoters of norA, norB and norC and abcA genes. Could also have an aminotransferase activity. This Staphylococcus aureus (strain USA300) protein is HTH-type transcriptional regulator NorG (norG).